A 235-amino-acid polypeptide reads, in one-letter code: DUP240 protein DFP4 (235 aa).

Residues methionine 1 to asparagine 44 are Cytoplasmic-facing. The chain crosses the membrane as a helical span at residues isoleucine 45–alanine 65. The Extracellular segment spans residues leucine 66–threonine 72. A helical membrane pass occupies residues leucine 73–proline 93. The Cytoplasmic segment spans residues tyrosine 94–valine 235.

Belongs to the DUP/COS family. In terms of assembly, interacts according to large scale protein interaction studies with BZZ1, SRB4 and SUA7.

It is found in the cell membrane. The protein is DUP240 protein DFP4 of Saccharomyces cerevisiae (strain ATCC 204508 / S288c) (Baker's yeast).